Consider the following 385-residue polypeptide: Acetylornithine aminotransferase (385 aa).

Residues 95 to 96 and Phe-122 contribute to the pyridoxal 5'-phosphate site; that span reads GA. Arg-125 provides a ligand contact to N(2)-acetyl-L-ornithine. 208–211 is a binding site for pyridoxal 5'-phosphate; it reads DEIQ. N6-(pyridoxal phosphate)lysine is present on Lys-237. Thr-265 contacts N(2)-acetyl-L-ornithine. Thr-266 contributes to the pyridoxal 5'-phosphate binding site.

It belongs to the class-III pyridoxal-phosphate-dependent aminotransferase family. ArgD subfamily. Homodimer. Pyridoxal 5'-phosphate serves as cofactor.

The protein localises to the cytoplasm. It catalyses the reaction N(2)-acetyl-L-ornithine + 2-oxoglutarate = N-acetyl-L-glutamate 5-semialdehyde + L-glutamate. It functions in the pathway amino-acid biosynthesis; L-arginine biosynthesis; N(2)-acetyl-L-ornithine from L-glutamate: step 4/4. The sequence is that of Acetylornithine aminotransferase from Bacillus subtilis (strain 168).